The primary structure comprises 503 residues: Lithocholate 6-beta-hydroxylase (503 aa).

Cys442 contributes to the heme binding site.

This sequence belongs to the cytochrome P450 family. Heme serves as cofactor.

Its subcellular location is the endoplasmic reticulum membrane. It localises to the microsome membrane. The catalysed reaction is lithocholate + reduced [NADPH--hemoprotein reductase] + O2 = 6beta-hydroxylithocholate + oxidized [NADPH--hemoprotein reductase] + H2O + H(+). Functionally, catalyzes the 6 beta-hydroxylation of lithocholic acid and steroid hormones. In Mesocricetus auratus (Golden hamster), this protein is Lithocholate 6-beta-hydroxylase (CYP3A10).